The following is a 345-amino-acid chain: DNA-directed RNA polymerase subunit alpha (345 aa).

The segment at 1–241 (MLRDTHLALQ…DQLGMFINFE (241 aa)) is alpha N-terminal domain (alpha-NTD). The alpha C-terminal domain (alpha-CTD) stretch occupies residues 257-345 (FNPNLLRKVD…ELVKRSDNPF (89 aa)).

The protein belongs to the RNA polymerase alpha chain family. In terms of assembly, homodimer. The RNAP catalytic core consists of 2 alpha, 1 beta, 1 beta' and 1 omega subunit. When a sigma factor is associated with the core the holoenzyme is formed, which can initiate transcription.

The enzyme catalyses RNA(n) + a ribonucleoside 5'-triphosphate = RNA(n+1) + diphosphate. In terms of biological role, DNA-dependent RNA polymerase catalyzes the transcription of DNA into RNA using the four ribonucleoside triphosphates as substrates. The polypeptide is DNA-directed RNA polymerase subunit alpha (Acidiphilium cryptum (strain JF-5)).